The following is a 378-amino-acid chain: Odorant receptor 33a (378 aa).

At 1 to 33 the chain is on the cytoplasmic side; that stretch reads MDSRRKVRSENLYKTYWLYWRLLGVEGDYPFRR. A helical transmembrane segment spans residues 34–54; sequence LVDFTITSFITILFPVHLILG. Residues 55-62 are Extracellular-facing; sequence MYKKPQIQ. The chain crosses the membrane as a helical span at residues 63-83; that stretch reads VFRSLHFTSECLFCSYKFFCF. At 84–127 the chain is on the cytoplasmic side; that stretch reads RWKLKEIKTIEGLLQDLDSRVESEEERNYFNQNPSRVARMLSKS. Residues 128–148 form a helical membrane-spanning segment; sequence YLVAAISAIITATVAGLFSTG. The Extracellular segment spans residues 149–163; sequence RNLMYLGWFPYDFQA. The helical transmembrane segment at 164-184 threads the bilayer; the sequence is TAAIYWISFSYQAIGSSLLIL. Over 185 to 254 the chain is Cytoplasmic; the sequence is ENLANDSYPP…LLRSTLHLSQ (70 aa). The chain crosses the membrane as a helical span at residues 255-275; the sequence is LGQFLSSGINISITLINILFF. Over 276–285 the chain is Extracellular; it reads AENNFAMLYY. The helical transmembrane segment at 286-306 threads the bilayer; sequence AVFFAAMLIELFPSCYYGILM. Topologically, residues 307-355 are cytoplasmic; that stretch reads TMEFDKLPYAIFSSNWLKMDKRYNRSLIILMQLTLVPVNIKAGGIVGID. Residues 356-376 form a helical membrane-spanning segment; it reads MSAFFATVRMAYSFYTLALSF. The Extracellular segment spans residues 377-378; sequence RV.

It belongs to the insect chemoreceptor superfamily. Heteromeric odorant receptor channel (TC 1.A.69) family. Or2a subfamily. As to quaternary structure, interacts with Orco. Complexes exist early in the endomembrane system in olfactory sensory neurons (OSNs), coupling these complexes to the conserved ciliary trafficking pathway. In terms of tissue distribution, expressed in 1-2 cells on the distal edge of the antenna but not the maxillary palp.

It localises to the cell membrane. Its function is as follows. Odorant receptor which mediates acceptance or avoidance behavior, depending on its substrates. The odorant receptor repertoire encodes a large collection of odor stimuli that vary widely in identity, intensity, and duration. May form a complex with Orco to form odorant-sensing units, providing sensitive and prolonged odorant signaling and calcium permeability. This is Odorant receptor 33a (Or33a) from Drosophila melanogaster (Fruit fly).